Reading from the N-terminus, the 383-residue chain is Arginine biosynthesis bifunctional protein ArgJ (383 aa).

Residues Thr146, Lys168, Thr179, Glu259, Asn378, and Ser383 each coordinate substrate. Thr179 functions as the Nucleophile in the catalytic mechanism.

The protein belongs to the ArgJ family. Heterotetramer of two alpha and two beta chains.

It is found in the cytoplasm. The catalysed reaction is N(2)-acetyl-L-ornithine + L-glutamate = N-acetyl-L-glutamate + L-ornithine. It carries out the reaction L-glutamate + acetyl-CoA = N-acetyl-L-glutamate + CoA + H(+). Its pathway is amino-acid biosynthesis; L-arginine biosynthesis; L-ornithine and N-acetyl-L-glutamate from L-glutamate and N(2)-acetyl-L-ornithine (cyclic): step 1/1. It participates in amino-acid biosynthesis; L-arginine biosynthesis; N(2)-acetyl-L-ornithine from L-glutamate: step 1/4. Catalyzes two activities which are involved in the cyclic version of arginine biosynthesis: the synthesis of N-acetylglutamate from glutamate and acetyl-CoA as the acetyl donor, and of ornithine by transacetylation between N(2)-acetylornithine and glutamate. This Streptomyces coelicolor (strain ATCC BAA-471 / A3(2) / M145) protein is Arginine biosynthesis bifunctional protein ArgJ.